The primary structure comprises 2184 residues: Genome polyprotein (2184 aa).

Residue Gly2 is the site of N-myristoyl glycine; by host attachment. The Cytoplasmic portion of the chain corresponds to Gly2–Gln1494. Residues Phe566 to Val582 are amphipathic alpha-helix. Catalysis depends on for protease 2A activity residues His871 and Asp889. Cys906 and Cys908 together coordinate Zn(2+). Cys960 acts as the For protease 2A activity in catalysis. Zn(2+) contacts are provided by Cys966 and His968. A membrane-binding region spans residues Ser1100 to Gln1172. An oligomerization region spans residues Ser1100 to Thr1238. Residues Ala1121–Gln1125 form an RNA-binding region. One can recognise an SF3 helicase domain in the interval Glu1204–Asn1360. Residues Cys1368, Cys1380, and Cys1385 each coordinate Zn(2+). The C4-type; degenerate zinc-finger motif lies at Cys1368–Cys1385. The segment at Glu1412–Val1419 is RNA-binding. The oligomerization stretch occupies residues Leu1423–Gln1428. An intramembrane segment occupies Ala1495–Tyr1510. Topologically, residues Lys1511–Phe2184 are cytoplasmic. Tyr1520 carries the post-translational modification O-(5'-phospho-RNA)-tyrosine. Residues Gly1540–Phe1718 enclose the Peptidase C3 domain. Catalysis depends on for protease 3C activity residues His1579, Glu1610, and Cys1686. Positions Gly1949 to Leu2065 constitute a RdRp catalytic domain. Positions 1955 and 2051 each coordinate Mg(2+).

Belongs to the picornaviruses polyprotein family. Interacts with capsid protein VP1 and capsid protein VP3 to form heterotrimeric protomers. In terms of assembly, interacts with capsid protein VP0, and capsid protein VP3 to form heterotrimeric protomers. Five protomers subsequently associate to form pentamers which serve as building blocks for the capsid. Interacts with capsid protein VP2, capsid protein VP3 and capsid protein VP4 following cleavage of capsid protein VP0. Interacts with host CXADR. As to quaternary structure, interacts with capsid protein VP1 and capsid protein VP3 in the mature capsid. Interacts with capsid protein VP0 and capsid protein VP1 to form heterotrimeric protomers. Five protomers subsequently associate to form pentamers which serve as building blocks for the capsid. Interacts with capsid protein VP4 in the mature capsid. Interacts with protein 2C; this interaction may be important for virion morphogenesis. In terms of assembly, interacts with capsid protein VP1 and capsid protein VP3. As to quaternary structure, homodimer. Homohexamer; forms a hexameric ring structure with 6-fold symmetry characteristic of AAA+ ATPases. Interacts (via N-terminus) with host RTN3 (via reticulon domain); this interaction is important for viral replication. Interacts with capsid protein VP3; this interaction may be important for virion morphogenesis. In terms of assembly, interacts with protein 3CD. As to quaternary structure, homodimer. Interacts with host GBF1. Interacts (via GOLD domain) with host ACBD3 (via GOLD domain); this interaction allows the formation of a viral protein 3A/ACBD3 heterotetramer with a 2:2 stoichiometry, which will stimulate the recruitment of host PI4KB in order to synthesize PI4P at the viral RNA replication sites. Interacts with RNA-directed RNA polymerase. In terms of assembly, interacts with protein 3AB and with RNA-directed RNA polymerase. As to quaternary structure, interacts with Viral protein genome-linked and with protein 3CD. It depends on Mg(2+) as a cofactor. Specific enzymatic cleavages in vivo by the viral proteases yield processing intermediates and the mature proteins. Post-translationally, myristoylation is required for the formation of pentamers during virus assembly. Further assembly of 12 pentamers and a molecule of genomic RNA generates the provirion. In terms of processing, during virion maturation, immature virions are rendered infectious following cleavage of VP0 into VP4 and VP2. This maturation seems to be an autocatalytic event triggered by the presence of RNA in the capsid and it is followed by a conformational change infectious virion. Myristoylation is required during RNA encapsidation and formation of the mature virus particle. Post-translationally, VPg is uridylylated by the polymerase into VPg-pUpU. This acts as a nucleotide-peptide primer for the genomic RNA replication.

It localises to the virion. The protein localises to the host cytoplasm. It is found in the host cytoplasmic vesicle membrane. Its subcellular location is the host nucleus. The enzyme catalyses a ribonucleoside 5'-triphosphate + H2O = a ribonucleoside 5'-diphosphate + phosphate + H(+). It catalyses the reaction Selective cleavage of Tyr-|-Gly bond in the picornavirus polyprotein.. It carries out the reaction RNA(n) + a ribonucleoside 5'-triphosphate = RNA(n+1) + diphosphate. The catalysed reaction is Selective cleavage of Gln-|-Gly bond in the poliovirus polyprotein. In other picornavirus reactions Glu may be substituted for Gln, and Ser or Thr for Gly.. Replication or transcription is subject to high level of random mutations by the nucleotide analog ribavirin. Functionally, forms an icosahedral capsid of pseudo T=3 symmetry with capsid proteins VP2 and VP3. The capsid is 300 Angstroms in diameter, composed of 60 copies of each capsid protein and enclosing the viral positive strand RNA genome. Capsid protein VP1 mainly forms the vertices of the capsid. Capsid protein VP1 interacts with host CXADR to provide virion attachment to target host cells. This attachment induces virion internalization. Tyrosine kinases are probably involved in the entry process. After binding to its receptor, the capsid undergoes conformational changes. Capsid protein VP1 N-terminus (that contains an amphipathic alpha-helix) and capsid protein VP4 are externalized. Together, they shape a pore in the host membrane through which viral genome is translocated to host cell cytoplasm. Its function is as follows. Forms an icosahedral capsid of pseudo T=3 symmetry with capsid proteins VP2 and VP3. The capsid is 300 Angstroms in diameter, composed of 60 copies of each capsid protein and enclosing the viral positive strand RNA genome. Lies on the inner surface of the capsid shell. After binding to the host receptor, the capsid undergoes conformational changes. Capsid protein VP4 is released, Capsid protein VP1 N-terminus is externalized, and together, they shape a pore in the host membrane through which the viral genome is translocated into the host cell cytoplasm. In terms of biological role, component of immature procapsids, which is cleaved into capsid proteins VP4 and VP2 after maturation. Allows the capsid to remain inactive before the maturation step. Functionally, cysteine protease that cleaves viral polyprotein and specific host proteins. It is responsible for the autocatalytic cleavage between the P1 and P2 regions, which is the first cleavage occurring in the polyprotein. Also cleaves the host translation initiation factor EIF4G1, in order to shut down the capped cellular mRNA translation. Inhibits the host nucleus-cytoplasm protein and RNA trafficking by cleaving host members of the nuclear pores. Counteracts stress granule formation probably by antagonizing its assembly or promoting its dissassembly. Cleaves and inhibits host IFIH1/MDA5, thereby inhibiting the type-I IFN production and the establishment of the antiviral state. Cleaves and inhibits host MAVS, thereby inhibiting the type-I IFN production and the establishment of the antiviral state. Its function is as follows. Plays an essential role in the virus replication cycle by acting as a viroporin. Creates a pore in the host endoplasmic reticulum and as a consequence releases Ca2+ in the cytoplasm of infected cell. In turn, high levels of cytoplasmic calcium may trigger membrane trafficking and transport of viral ER-associated proteins to viroplasms, sites of viral genome replication. Induces and associates with structural rearrangements of intracellular membranes. Displays RNA-binding, nucleotide binding and NTPase activities. May play a role in virion morphogenesis and viral RNA encapsidation by interacting with the capsid protein VP3. In terms of biological role, localizes the viral replication complex to the surface of membranous vesicles. Together with protein 3CD binds the Cis-Active RNA Element (CRE) which is involved in RNA synthesis initiation. Acts as a cofactor to stimulate the activity of 3D polymerase, maybe through a nucleid acid chaperone activity. Functionally, localizes the viral replication complex to the surface of membranous vesicles. It inhibits host cell endoplasmic reticulum-to-Golgi apparatus transport and causes the disassembly of the Golgi complex, possibly through GBF1 interaction. This would result in depletion of MHC, trail receptors and IFN receptors at the host cell surface. Plays an essential role in viral RNA replication by recruiting ACBD3 and PI4KB at the viral replication sites, thereby allowing the formation of the rearranged membranous structures where viral replication takes place. Its function is as follows. Acts as a primer for viral RNA replication and remains covalently bound to viral genomic RNA. VPg is uridylylated prior to priming replication into VPg-pUpU. The oriI viral genomic sequence may act as a template for this. The VPg-pUpU is then used as primer on the genomic RNA poly(A) by the RNA-dependent RNA polymerase to replicate the viral genome. During genome replication, the VPg-RNA linkage is removed by the host TDP2, thereby accelerating replication. During the late stage of the replication cycle, host TDP2 is excluded from sites of viral RNA synthesis and encapsidation, allowing for the generation of progeny virions. Involved in the viral replication complex and viral polypeptide maturation. It exhibits protease activity with a specificity and catalytic efficiency that is different from protease 3C. Protein 3CD lacks polymerase activity. Protein 3CD binds to the 5'UTR of the viral genome. In terms of biological role, replicates the viral genomic RNA on the surface of intracellular membranes. May form linear arrays of subunits that propagate along a strong head-to-tail interaction called interface-I. Covalently attaches UMP to a tyrosine of VPg, which is used to prime RNA synthesis. The positive stranded RNA genome is first replicated at virus induced membranous vesicles, creating a dsRNA genomic replication form. This dsRNA is then used as template to synthesize positive stranded RNA genomes. ss(+)RNA genomes are either translated, replicated or encapsidated. Functionally, major viral protease that mediates proteolytic processing of the polyprotein. Cleaves host EIF5B, contributing to host translation shutoff. Also cleaves host PABPC1, contributing to host translation shutoff. Cleaves host NLRP1, triggers host N-glycine-mediated degradation of the autoinhibitory NLRP1 N-terminal fragment. In Coxsackievirus B6 (strain Schmitt), this protein is Genome polyprotein.